We begin with the raw amino-acid sequence, 790 residues long: LMBR1 domain-containing protein 2 homolog B (790 aa).

A compositionally biased stretch (low complexity) spans methionine 1–serine 21. The tract at residues methionine 1–isoleucine 22 is disordered. Transmembrane regions (helical) follow at residues phenylalanine 34–glycine 54, isoleucine 66–valine 86, phenylalanine 128–serine 148, valine 167–valine 187, and phenylalanine 195–methionine 215. Positions leucine 236–threonine 266 form a coiled coil. The next 3 membrane-spanning stretches (helical) occupy residues phenylalanine 401 to valine 421, proline 442 to tyrosine 462, and phenylalanine 539 to histidine 559. 3 disordered regions span residues serine 630–serine 665, leucine 701–lysine 751, and serine 765–lysine 790. Residues isoleucine 644–serine 665 show a composition bias toward polar residues. Over residues asparagine 706–serine 734 the composition is skewed to low complexity. The segment covering isoleucine 735–proline 746 has biased composition (polar residues). The span at phenylalanine 766–glutamate 778 shows a compositional bias: acidic residues.

The protein belongs to the LIMR family.

It localises to the membrane. This chain is LMBR1 domain-containing protein 2 homolog B, found in Dictyostelium discoideum (Social amoeba).